We begin with the raw amino-acid sequence, 191 residues long: Fe/S biogenesis protein NfuA (191 aa).

Positions 149 and 152 each coordinate [4Fe-4S] cluster.

It belongs to the NfuA family. As to quaternary structure, homodimer. It depends on [4Fe-4S] cluster as a cofactor.

Its function is as follows. Involved in iron-sulfur cluster biogenesis. Binds a 4Fe-4S cluster, can transfer this cluster to apoproteins, and thereby intervenes in the maturation of Fe/S proteins. Could also act as a scaffold/chaperone for damaged Fe/S proteins. This chain is Fe/S biogenesis protein NfuA, found in Erwinia tasmaniensis (strain DSM 17950 / CFBP 7177 / CIP 109463 / NCPPB 4357 / Et1/99).